The following is a 181-amino-acid chain: Adenine phosphoribosyltransferase (181 aa).

Belongs to the purine/pyrimidine phosphoribosyltransferase family. In terms of assembly, homodimer.

The protein resides in the cytoplasm. The catalysed reaction is AMP + diphosphate = 5-phospho-alpha-D-ribose 1-diphosphate + adenine. It participates in purine metabolism; AMP biosynthesis via salvage pathway; AMP from adenine: step 1/1. Catalyzes a salvage reaction resulting in the formation of AMP, that is energically less costly than de novo synthesis. The sequence is that of Adenine phosphoribosyltransferase from Acidobacterium capsulatum (strain ATCC 51196 / DSM 11244 / BCRC 80197 / JCM 7670 / NBRC 15755 / NCIMB 13165 / 161).